Here is a 188-residue protein sequence, read N- to C-terminus: ATP-dependent protease subunit HslV (188 aa).

The active site involves Thr14. Na(+) is bound by residues Ala173, Cys176, and Thr179.

The protein belongs to the peptidase T1B family. HslV subfamily. As to quaternary structure, a double ring-shaped homohexamer of HslV is capped on each side by a ring-shaped HslU homohexamer. The assembly of the HslU/HslV complex is dependent on binding of ATP.

The protein localises to the cytoplasm. It catalyses the reaction ATP-dependent cleavage of peptide bonds with broad specificity.. Allosterically activated by HslU binding. Functionally, protease subunit of a proteasome-like degradation complex believed to be a general protein degrading machinery. The polypeptide is ATP-dependent protease subunit HslV (Caulobacter vibrioides (strain ATCC 19089 / CIP 103742 / CB 15) (Caulobacter crescentus)).